The chain runs to 544 residues: Chaperonin GroEL 2 (544 aa).

ATP is bound by residues 29 to 32, 86 to 90, Gly413, 479 to 481, and Asp495; these read TLGP, DGTTT, and NAA.

This sequence belongs to the chaperonin (HSP60) family. As to quaternary structure, forms a cylinder of 14 subunits composed of two heptameric rings stacked back-to-back. Interacts with the co-chaperonin GroES.

Its subcellular location is the cytoplasm. The enzyme catalyses ATP + H2O + a folded polypeptide = ADP + phosphate + an unfolded polypeptide.. Together with its co-chaperonin GroES, plays an essential role in assisting protein folding. The GroEL-GroES system forms a nano-cage that allows encapsulation of the non-native substrate proteins and provides a physical environment optimized to promote and accelerate protein folding. The chain is Chaperonin GroEL 2 from Prochlorococcus marinus (strain MIT 9313).